The primary structure comprises 490 residues: ATP synthase subunit beta, chloroplastic (490 aa).

170-177 (GGAGVGKT) contacts ATP.

It belongs to the ATPase alpha/beta chains family. In terms of assembly, F-type ATPases have 2 components, CF(1) - the catalytic core - and CF(0) - the membrane proton channel. CF(1) has five subunits: alpha(3), beta(3), gamma(1), delta(1), epsilon(1). CF(0) has four main subunits: a(1), b(1), b'(1) and c(9-12).

The protein localises to the plastid. It localises to the chloroplast thylakoid membrane. The catalysed reaction is ATP + H2O + 4 H(+)(in) = ADP + phosphate + 5 H(+)(out). Produces ATP from ADP in the presence of a proton gradient across the membrane. The catalytic sites are hosted primarily by the beta subunits. This Calystegia sepium (Hedge bindweed) protein is ATP synthase subunit beta, chloroplastic.